The primary structure comprises 103 residues: Carboxysome shell protein CsoS1 (103 aa).

The 86-residue stretch at 9–94 folds into the BMC domain; that stretch reads ALGMIETRGL…PHREVEPALG (86 aa).

This sequence belongs to the bacterial microcompartments protein family. CsoS1 subfamily. As to quaternary structure, homohexamer with a small central pore. Forms a CsoS2-CsoS1-RuBisCO complex.

The protein localises to the carboxysome. In terms of biological role, one of the shell proteins of the carboxysome, a polyhedral inclusion where RuBisCO (ribulose bisphosphate carboxylase, ccbL-ccbS) is sequestered. Assembles into hexamers which make sheets that form the facets of the polyhedral carboxysome. This Prochlorococcus marinus (strain MIT 9313) protein is Carboxysome shell protein CsoS1.